We begin with the raw amino-acid sequence, 739 residues long: Nucleoprotein (739 aa).

Residues 334–363 (VNVGEQYQQLREAATEAEKQLQQYAESREL) adopt a coiled-coil conformation. A disordered region spans residues 415 to 646 (PKTSGHYDDD…QDSDNTQPEH (232 aa)). Composition is skewed to low complexity over residues 449-458 (SQDTTIPDVV) and 504-514 (KGGQQKNSQKG). Residues 520 to 530 (RQTQSRPTQNV) show a composition bias toward polar residues. The span at 567-579 (EEADPLDDADDET) shows a compositional bias: acidic residues. Over residues 611–638 (YRDHSEKRELPQDEQQDQDHTQEARNQD) the composition is skewed to basic and acidic residues.

It belongs to the filoviruses nucleoprotein family. In terms of assembly, homooligomer. Homomultimerizes to form the nucleocapsid. Binds to viral genomic RNA. Interacts with VP35 and VP30 to form the nucleocapsid. Interacts with host PPP2R5C; this interaction leads to VP30 dephosphorylation and viral transcription. Interacts with VP24; this interaction facilitates nucleocapsid assembly and genome packaging. Interacts with matrix protein VP40; this interaction allows recruitment of the nucleocapsid into progeny virions. Interacts with host STAU1. Interacts with host NXF1 (via RNA-binding domain); this interaction recruits NXF1 to the inclusion bodies were viral replication takes place, probably to export viral mRNA-NXF1 complexes from these sites. Interacts with host CCDC92; this interaction sequesters NP in the host cytoplasm. Interacts with host TRIM14. In terms of processing, phosphorylated and O-glycosylated by host. Acetylated by host EP300 in vitro.

The protein resides in the virion. The protein localises to the host cytoplasm. Functionally, oligomerizes into helical capsid to encapsidate the viral genome, protecting it from nucleases and the cellular innate immune response. VP35 binds to and stabilizes monomeric NP, keeping it soluble. Upon virus replication, NP is recruited to bind cooperatively viral genomic RNA and VP35 is released. The encapsidated genomic RNA is termed the nucleocapsid and serves as template for transcription and replication. The nucleocapsid is helical with a pitch of 10.81 NP per turn and a diameter of about 22nm. Each NP binds to six nucleotides of viral genomic RNA, three being exposed to the solvant and three hidden into the nucleocapsid. Also recruits host PPP2R5C phosphatase to dephosphorylate VP30 and thereby promote viral transcription. Upon virion assembly and budding, NP binds to VP24 and possibly host STAU1. The chain is Nucleoprotein (NP) from Epomops franqueti (Franquet's epauletted fruit bat).